The primary structure comprises 281 residues: MATNFLVHEKIWFDKFKYDDAERRFYEQMNGPVAGASRQENGASVILRDIARARENIQKSLAGTSGPGASSGPSGDHSELVVRIASLEVENQSLRGVVQELQQAISKLEARLNVLEKSSPGHRATAPQTQHVSPMRQVEPPAKKPATPAEDDEDDDIDLFGSDNEEEDKEAAQLREERLRQYAEKKAKKPALVAKSSILLDVKPWDDETDMAQLEACVRSIQLDGLVWGASKLVPVGYGIRKLQIQCVVEDDKVGTDLLEEEITKFEEHVQSVDIAAFNKI.

An N-acetylalanine modification is found at alanine 2. Lysine 17 carries the post-translational modification N6-acetyllysine. Phosphoserine is present on residues serine 37, serine 44, serine 60, serine 86, and serine 106. The tract at residues 80 to 115 (LVVRIASLEVENQSLRGVVQELQQAISKLEARLNVL) is leucine-zipper. The residue at position 107 (lysine 107) is an N6-acetyllysine. Position 117 is an N6-acetyllysine; alternate (lysine 117). At lysine 117 the chain carries N6-succinyllysine; alternate. Residues 118–172 (SSPGHRATAPQTQHVSPMRQVEPPAKKPATPAEDDEDDDIDLFGSDNEEEDKEAA) are disordered. Serine 119 is modified (phosphoserine). The residue at position 129 (threonine 129) is a Phosphothreonine. Position 133 is a phosphoserine (serine 133). Phosphothreonine is present on threonine 147. Over residues 149–169 (AEDDEDDDIDLFGSDNEEEDK) the composition is skewed to acidic residues. Serine 162 is subject to Phosphoserine; by CK2. Residues 173-281 (QLREERLRQY…SVDIAAFNKI (109 aa)) are catalytic (GEF).

Belongs to the EF-1-beta/EF-1-delta family. In terms of assembly, EF-1 is composed of 4 subunits: alpha, beta, delta isoform 1, and gamma. Isoform 2 interacts with HSF1 and NFE2L2.

It localises to the nucleus. Functionally, EF-1-beta and EF-1-delta stimulate the exchange of GDP bound to EF-1-alpha to GTP, regenerating EF-1-alpha for another round of transfer of aminoacyl-tRNAs to the ribosome. In terms of biological role, regulates induction of heat-shock-responsive genes through association with heat shock transcription factors and direct DNA-binding at heat shock promoter elements (HSE). The protein is Elongation factor 1-delta (EEF1D) of Macaca fascicularis (Crab-eating macaque).